The following is a 471-amino-acid chain: UTP--glucose-1-phosphate uridylyltransferase (471 aa).

UTP is bound by residues 87–90 (LNGG), lysine 101, glutamine 164, and glycine 193. 89–90 (GG) contacts substrate. Residues histidine 194 and 222-224 (NSD) contribute to the substrate site. 2 residues coordinate UTP: aspartate 224 and lysine 362.

The protein belongs to the UDPGP type 1 family.

Its subcellular location is the cytoplasm. The catalysed reaction is alpha-D-glucose 1-phosphate + UTP + H(+) = UDP-alpha-D-glucose + diphosphate. Plays a central role as a glucosyl donor in cellular metabolic pathways. The chain is UTP--glucose-1-phosphate uridylyltransferase (UGP) from Astragalus penduliflorus (Mountain lentil).